The primary structure comprises 176 residues: ATP synthase subunit delta (176 aa).

Belongs to the ATPase delta chain family. In terms of assembly, F-type ATPases have 2 components, F(1) - the catalytic core - and F(0) - the membrane proton channel. F(1) has five subunits: alpha(3), beta(3), gamma(1), delta(1), epsilon(1). F(0) has three main subunits: a(1), b(2) and c(10-14). The alpha and beta chains form an alternating ring which encloses part of the gamma chain. F(1) is attached to F(0) by a central stalk formed by the gamma and epsilon chains, while a peripheral stalk is formed by the delta and b chains.

The protein localises to the cell inner membrane. In terms of biological role, f(1)F(0) ATP synthase produces ATP from ADP in the presence of a proton or sodium gradient. F-type ATPases consist of two structural domains, F(1) containing the extramembraneous catalytic core and F(0) containing the membrane proton channel, linked together by a central stalk and a peripheral stalk. During catalysis, ATP synthesis in the catalytic domain of F(1) is coupled via a rotary mechanism of the central stalk subunits to proton translocation. Functionally, this protein is part of the stalk that links CF(0) to CF(1). It either transmits conformational changes from CF(0) to CF(1) or is implicated in proton conduction. This is ATP synthase subunit delta from Aliarcobacter butzleri (strain RM4018) (Arcobacter butzleri).